The chain runs to 229 residues: Octanoyltransferase (229 aa).

Positions 30–223 constitute a BPL/LPL catalytic domain; the sequence is PDTPDTIWLV…QLQQRAQAHP (194 aa). Residues 69 to 76, 141 to 143, and 154 to 156 each bind substrate; these read RGGQITYH, ALG, and GVS. The Acyl-thioester intermediate role is filled by Cys-172.

It belongs to the LipB family.

It is found in the cytoplasm. The catalysed reaction is octanoyl-[ACP] + L-lysyl-[protein] = N(6)-octanoyl-L-lysyl-[protein] + holo-[ACP] + H(+). It functions in the pathway protein modification; protein lipoylation via endogenous pathway; protein N(6)-(lipoyl)lysine from octanoyl-[acyl-carrier-protein]: step 1/2. Functionally, catalyzes the transfer of endogenously produced octanoic acid from octanoyl-acyl-carrier-protein onto the lipoyl domains of lipoate-dependent enzymes. Lipoyl-ACP can also act as a substrate although octanoyl-ACP is likely to be the physiological substrate. The chain is Octanoyltransferase from Ralstonia pickettii (strain 12J).